The primary structure comprises 459 residues: Putrescine aminotransferase (459 aa).

Pyridoxal 5'-phosphate is bound by residues 150–151 (GT) and Gln-274. Lys-300 bears the N6-(pyridoxal phosphate)lysine mark. Thr-332 is a pyridoxal 5'-phosphate binding site.

Belongs to the class-III pyridoxal-phosphate-dependent aminotransferase family. Putrescine aminotransferase subfamily. It depends on pyridoxal 5'-phosphate as a cofactor.

It catalyses the reaction an alkane-alpha,omega-diamine + 2-oxoglutarate = an omega-aminoaldehyde + L-glutamate. The enzyme catalyses putrescine + 2-oxoglutarate = 1-pyrroline + L-glutamate + H2O. It carries out the reaction cadaverine + 2-oxoglutarate = 5-aminopentanal + L-glutamate. It participates in amine and polyamine degradation; putrescine degradation; 4-aminobutanal from putrescine (transaminase route): step 1/1. Its function is as follows. Catalyzes the aminotransferase reaction from putrescine to 2-oxoglutarate, leading to glutamate and 4-aminobutanal, which spontaneously cyclizes to form 1-pyrroline. This is the first step in one of two pathways for putrescine degradation, where putrescine is converted into 4-aminobutanoate (gamma-aminobutyrate or GABA) via 4-aminobutanal. Also functions as a cadaverine transaminase in a a L-lysine degradation pathway to succinate that proceeds via cadaverine, glutarate and L-2-hydroxyglutarate. The chain is Putrescine aminotransferase from Escherichia coli (strain SMS-3-5 / SECEC).